Reading from the N-terminus, the 248-residue chain is Transcriptional activator protein FnrL (248 aa).

The HTH crp-type domain occupies 154–232 (KTAREKIASL…KRHVIVTDFA (79 aa)). A DNA-binding region (H-T-H motif) is located at residues 191-210 (REEMADYLGLTLETVSRQVS).

Functionally, anaerobic regulatory protein; transcriptional activator of hemA. Appears to regulate other genes. The polypeptide is Transcriptional activator protein FnrL (fnrL) (Cereibacter sphaeroides (strain ATCC 17023 / DSM 158 / JCM 6121 / CCUG 31486 / LMG 2827 / NBRC 12203 / NCIMB 8253 / ATH 2.4.1.) (Rhodobacter sphaeroides)).